We begin with the raw amino-acid sequence, 515 residues long: Maturase K (515 aa).

Belongs to the intron maturase 2 family. MatK subfamily.

The protein resides in the plastid. It localises to the chloroplast. Functionally, usually encoded in the trnK tRNA gene intron. Probably assists in splicing its own and other chloroplast group II introns. The polypeptide is Maturase K (Pinus contorta (Shore pine)).